The sequence spans 3010 residues: Genome polyprotein (3010 aa).

Position 2 is an N-acetylserine; by host (S2). Residues 2–23 form an interaction with STAT1 region; sequence STNPKPQRKTKRNTNRRPQDVK. Positions 2-58 are interaction with EIF2AK2/PKR; that stretch reads STNPKPQRKTKRNTNRRPQDVKFPGGGQIVGGVYLLPRRGPRLGVRATRKTSERSQP. The interaction with DDX3X stretch occupies residues 2-59; that stretch reads STNPKPQRKTKRNTNRRPQDVKFPGGGQIVGGVYLLPRRGPRLGVRATRKTSERSQPR. The interval 2 to 75 is disordered; sequence STNPKPQRKT…PKARQPEGRA (74 aa). The Cytoplasmic segment spans residues 2 to 168; the sequence is STNPKPQRKT…EDGVNYATGN (167 aa). Short sequence motifs (nuclear localization signal) lie at residues 5-13 and 38-43; these read PKPQRKTKR and PRRGPR. Positions 7-16 are enriched in basic residues; it reads PQRKTKRNTN. The span at 32–47 shows a compositional bias: low complexity; the sequence is GGVYLLPRRGPRLGVR. At S53 the chain carries Phosphoserine; by host. 2 consecutive short sequence motifs (nuclear localization signal) follow at residues 58 to 64 and 66 to 71; these read PRGRRQP and PKARQP. Position 99 is a phosphoserine; by host (S99). The segment at 112–152 is important for endoplasmic reticulum and mitochondrial localization; sequence PRRRSRNLGKVIDTLTCGFADLMGYIPLVGAPLGGVARALA. A Phosphoserine; by host PKA modification is found at S116. An interaction with APOA2 region spans residues 122–173; that stretch reads VIDTLTCGFADLMGYIPLVGAPLGGVARALAHGVRVVEDGVNYATGNLPGCS. Residues 164 to 167 are important for lipid droplets localization; that stretch reads YATG. Residues 169–189 form a helical membrane-spanning segment; it reads LPGCSFSIFLLALLSCLTIPA. Residues 178–191 constitute a propeptide, ER anchor for the core protein, removed in mature form by host signal peptidase; it reads LLALLSCLTIPASA. At 190 to 358 the chain is on the lumenal side; sequence SAYEVRNVSG…AGAHWGVLAG (169 aa). 4 N-linked (GlcNAc...) asparagine; by host glycosylation sites follow: N196, N209, N234, and N250. The segment at 265–296 is important for fusion; the sequence is LVGAAAFCSAMYVGDLCGSVFLVSQLFTFSPR. N305 is a glycosylation site (N-linked (GlcNAc...) asparagine; by host). The helical transmembrane segment at 359–379 threads the bilayer; sequence LAYYSMVGNWAKVLIVMLLFA. Topologically, residues 380–725 are lumenal; the sequence is GVDGETRVTG…WDYIVILFLL (346 aa). The HVR1 stretch occupies residues 385-411; the sequence is TRVTGGQIARNAYSLTTLFSSGSAQNI. N-linked (GlcNAc...) (high mannose) asparagine; by host glycans are attached at residues N417, N423, N430, and N448. 4 disulfide bridges follow: C429–C552, C452–C459, C486–C494, and C503–C508. An HVR2 region spans residues 474-479; that stretch reads YAEQGG. Residues 480–493 form a CD81-binding 1 region; the sequence is QDQRPYCWHYAPKP. The N-linked (GlcNAc...) (high mannose) asparagine; by host glycan is linked to N532. Residue N540 is glycosylated (N-linked (GlcNAc...) asparagine; by host). Positions 544-551 are CD81-binding 2; it reads PPQGNWFG. N-linked (GlcNAc...) (high mannose) asparagine; by host glycosylation occurs at N556. C564 and C569 are disulfide-bonded. N-linked (GlcNAc...) (high mannose) asparagine; by host glycosylation occurs at N576. 3 disulfides stabilise this stretch: C581-C585, C597-C620, and C607-C644. Residues N623 and N645 are each glycosylated (N-linked (GlcNAc...) (high mannose) asparagine; by host). The cysteines at positions 652 and 677 are disulfide-linked. The tract at residues 660 to 671 is PKR/eIF2-alpha phosphorylation homology domain (PePHD); that stretch reads LELSPLLLSTTE. Residues 726–746 traverse the membrane as a helical segment; sequence LADARVCACLWMMLLIAQAEA. Topologically, residues 747-757 are lumenal; it reads ALENLVVLNAA. Residues 758-778 traverse the membrane as a helical segment; the sequence is SVAGAHGILSFLVFFCAAWYI. Residues 779–781 are Cytoplasmic-facing; sequence KGK. A helical membrane pass occupies residues 782-803; that stretch reads LVPGAAYAFYGVWPLLLLLLAL. Over 804–813 the chain is Lumenal; the sequence is PPRAYAMERE. The chain crosses the membrane as a helical span at residues 814 to 834; the sequence is MAASCGGAVFVGLVLLTLSPY. At 835-838 the chain is on the cytoplasmic side; the sequence is YKEF. Residues 839–859 traverse the membrane as a helical segment; it reads LARLIWWLQYFITRAEAHLQV. Topologically, residues 860–881 are lumenal; that stretch reads WIPPLNIRGGRDAIILLACVVH. The chain crosses the membrane as a helical span at residues 882–902; sequence PELIFDITKLLLAILGPLMVL. The Peptidase C18 domain occupies 903 to 1026; sequence QASITQVPYF…SLEGQGWRLL (124 aa). Over 903–1657 the chain is Cytoplasmic; it reads QASITQVPYF…CMSADLEVVT (755 aa). A protease NS2-3 region spans residues 904–1206; the sequence is ASITQVPYFV…PVESMETTMR (303 aa). C922 carries S-palmitoyl cysteine; by host lipidation. An interaction with host SCPS1 region spans residues 929 to 949; the sequence is AGGHYVQMAFVKLTALTGTYV. Active-site for protease NS2 activity; shared with dimeric partner residues include H952, E972, and C993. Positions 1027 to 1208 constitute a Peptidase S29 domain; that stretch reads APITAYSQQT…ESMETTMRSP (182 aa). Catalysis depends on charge relay system; for serine protease NS3 activity residues H1083 and D1107. Zn(2+) contacts are provided by C1123 and C1125. S1165 serves as the catalytic Charge relay system; for serine protease NS3 activity. C1171 and H1175 together coordinate Zn(2+). The Helicase ATP-binding domain maps to 1217-1369; it reads PAVPQTFQVA…PNIEEVALSN (153 aa). Residue 1230–1237 participates in ATP binding; that stretch reads APTGSGKS. Residues S1237 and E1317 each coordinate Mg(2+). The DECH box motif lies at 1316-1319; sequence DECH. Positions 1486-1497 are RNA-binding; the sequence is QRRGRTGRGRRG. Residues 1658–1678 form a helical membrane-spanning segment; sequence STWVLVGGVLAALAAYCLTTG. Residues 1679 to 1690 form an NS3-binding region; that stretch reads SVVIVGRIILSG. The Cytoplasmic portion of the chain corresponds to 1679–1805; the sequence is SVVIVGRIIL…SITSPLSTQN (127 aa). The helical transmembrane segment at 1806–1824 threads the bilayer; it reads TLLFNIWGGWVAAQLAPPS. The Lumenal portion of the chain corresponds to 1825 to 1828; that stretch reads AASA. A helical transmembrane segment spans residues 1829–1849; it reads FVGAGIAGAAVGSIGLGKVLV. D1850 is a topological domain (cytoplasmic). Residues 1851–1871 form a helical membrane-spanning segment; sequence ILAGYGAGVAGALVAFKIMSG. Residues 1872 to 1881 lie on the Lumenal side of the membrane; sequence EVPSTEDLVN. Residues 1882–1902 form a helical membrane-spanning segment; the sequence is LLPAILSPGALVVGVVCAAIL. At 1903 to 1972 the chain is on the cytoplasmic side; that stretch reads RRHVGPGEGA…WINEDCSTPC (70 aa). S-palmitoyl cysteine; by host attachment occurs at residues C1968 and C1972. An intramembrane segment occupies 1973 to 2002; sequence SGSWLRDVWDWICTVLTDFKTWLQSKLLPR. Residues 2003–2989 lie on the Cytoplasmic side of the membrane; it reads LPGVPFFSCQ…YHSLSRARPR (987 aa). C2011, C2029, C2031, and C2052 together coordinate Zn(2+). An FKBP8-binding region spans residues 2120-2208; the sequence is EFFTEVDGVR…ASSSASQLSA (89 aa). A transcriptional activation region spans residues 2120–2332; it reads EFFTEVDGVR…PIPPPRRKRT (213 aa). Residues 2135–2139 are interaction with non-structural protein 4A; sequence PACKP. Residues 2189-2441 are interaction with host SKP2; that stretch reads RLARGSPPSL…PCAAEESKLP (253 aa). Phosphoserine; by host; in p56 is present on S2194. Phosphoserine; by host; in p58 is present on residues S2197, S2201, S2204, S2207, and S2210. The segment at 2210–2249 is ISDR; the sequence is SLKATCTTHHDSPDVDLIEANLLWRQEMGGNITRVESENK. Residues 2210 to 2275 are interaction with EIF2AK2/PKR; the sequence is SLKATCTTHH…REPSVAAEIL (66 aa). Residues 2249 to 2306 form an NS4B-binding region; the sequence is KVVILDSFDPLRAEEDEREPSVAAEILRKTKRFPPAMPIWARPDYNPPLLESWKDPDY. An SH3-binding motif is present at residues 2322–2325; the sequence is PPIP. The short motif at 2326-2334 is the Nuclear localization signal element; sequence PPRRKRTVV. A Glycyl lysine isopeptide (Lys-Gly) (interchain with G-Cter in ubiquitin) cross-link involves residue K2350. Residues 2351 to 2365 show a composition bias toward polar residues; sequence TFGSSGSSAVDSGTA. Residues 2351 to 2407 are disordered; that stretch reads TFGSSGSSAVDSGTATAPPDQASDDGDQGSDVESYSSMPPLEGEPGDPDLSDGSWST. The V3 stretch occupies residues 2354-2377; it reads SSGSSAVDSGTATAPPDQASDDGD. Residues S2448 and S2461 each carry the phosphoserine; by host modification. Positions 2633 to 2751 constitute a RdRp catalytic domain; the sequence is PMGFSYDTRC…ICESAGTQED (119 aa). D2639, D2737, and D2738 together coordinate Mg(2+). The helical transmembrane segment at 2990 to 3010 threads the bilayer; sequence WFMLCLLLLSVGVGIYLLPNR.

This sequence belongs to the hepacivirus polyprotein family. As to quaternary structure, homooligomer. Interacts with E1 (via C-terminus). Interacts with the non-structural protein 5A. Interacts (via N-terminus) with host STAT1 (via SH2 domain); this interaction results in decreased STAT1 phosphorylation and ubiquitin-mediated proteasome-dependent STAT1 degradation, leading to decreased IFN-stimulated gene transcription. Interacts with host STAT3; this interaction constitutively activates STAT3. Interacts with host LTBR receptor. Interacts with host TNFRSF1A receptor and possibly induces apoptosis. Interacts with host HNRPK. Interacts with host YWHAE. Interacts with host UBE3A/E6AP. Interacts with host DDX3X. Interacts with host APOA2. Interacts with host RXRA protein. Interacts with host SP110 isoform 3/Sp110b; this interaction sequesters the transcriptional corepressor SP110 away from the nucleus. Interacts with host CREB3 nuclear transcription protein; this interaction triggers cell transformation. Interacts with host ACY3. Interacts with host C1QR1. Interacts with host RBM24; this interaction, which enhances the interaction of the mature core protein with 5'-UTR, may inhibit viral translation and favor replication. Interacts with host EIF2AK2/PKR; this interaction induces the autophosphorylation of EIF2AK2. Part of the viral assembly initiation complex composed of NS2, E1, E2, NS3, NS4A, NS5A and the mature core protein. In terms of assembly, forms a heterodimer with envelope glycoprotein E2. Interacts with mature core protein. Interacts with protease NS2. The heterodimer E1/E2 interacts with host CLDN1; this interaction plays a role in viral entry into host cell. Interacts with host SPSB2 (via C-terminus). Part of the viral assembly initiation complex composed of NS2, E1, E2, NS3, NS4A, NS5A and the mature core protein. Interacts with host NEURL3; this interaction prevents E1 binding to glycoprotein E2. Forms a heterodimer with envelope glycoprotein E1. Interacts with host CD81 and SCARB1 receptors; these interactions play a role in viral entry into host cell. Interacts with host EIF2AK2/PKR; this interaction inhibits EIF2AK2 and probably allows the virus to evade the innate immune response. Interacts with host CD209/DC-SIGN and CLEC4M/DC-SIGNR. Interact with host SPCS1; this interaction is essential for viral particle assembly. Interacts with protease NS2. The heterodimer E1/E2 interacts with host CLDN1; this interaction plays a role in viral entry into host cell. Part of the viral assembly initiation complex composed of NS2, E1, E2, NS3, NS4A, NS5A and the mature core protein. Interacts with host SLC3A2/4F2hc; the interaction may facilitate viral entry into host cell. Interacts with human PLSCR1. As to quaternary structure, homohexamer. Homoheptamer. Interacts with protease NS2. In terms of assembly, homodimer. Interacts with host SPCS1; this interaction is essential for viral particle assembly. Interacts with envelope glycoprotein E1. Interacts with envelope glycoprotein E2. Interacts with viroporin p7. Interacts with serine protease/helicase NS3. Part of the replication complex composed of NS2, NS3, NS4A, NS4B, NS5A and the RNA-directed RNA polymerase embedded in an ER-derived membranous web. Part of the viral assembly initiation complex composed of NS2, E1, E2, NS3, NS4A, NS5A and the mature core protein. Interacts with protease NS2. Interacts with non-structural protein 4A; this interaction stabilizes the folding of NS3 serine protease. NS3-NS4A interaction is essential for NS3 activation and allows membrane anchorage of the latter. NS3/NS4A complex also prevents phosphorylation of host IRF3, thus preventing the establishment of dsRNA induced antiviral state. Interacts with host MAVS; this interaction leads to the cleavage and inhibition of host MAVS. Interacts with host TICAM1; this interaction leads to the cleavage and inhibition of host TICAM1. Interacts with host TANK-binding kinase/TBK1; this interaction results in the inhibition of the association between TBK1 and IRF3, which leads to the inhibition of IRF3 activation. Interacts with host RBM24. Part of the replication complex composed of NS2, NS3, NS4A, NS4B, NS5A and the RNA-directed RNA polymerase embedded in an ER-derived membranous web. Part of the viral assembly initiation complex composed of NS2, E1, E2, NS3, NS4A, NS5A and the mature core protein. As to quaternary structure, interacts with NS3 serine protease; this interaction stabilizes the folding of NS3 serine protease. NS3-NS4A interaction is essential for NS3 activation and allows membrane anchorage of the latter. Interacts with non-structural protein 5A (via N-terminus). Part of the replication complex composed of NS2, NS3, NS4A, NS4B, NS5A and the RNA-directed RNA polymerase embedded in an ER-derived membranous web. Part of the viral assembly initiation complex composed of NS2, E1, E2, NS3, NS4A, NS5A and the mature core protein. In terms of assembly, homomultimer. Interacts with non-structural protein NS5A. Interacts with host PLA2G4C; this interaction likely initiates the recruitment of replication complexes to lipid droplets. Interacts with host STING; this interaction disrupts the interaction between STING and TBK1 thereby suppressing the interferon signaling. Part of the replication complex composed of NS2, NS3, NS4A, NS4B, NS5A and the RNA-directed RNA polymerase embedded in an ER-derived membranous web. Monomer. Homodimer; dimerization is required for RNA-binding. Interacts with the mature core protein. Interacts (via N-terminus) with non-structural protein 4A. Interacts with non-structural protein 4B. Interacts (via region D2) with RNA-directed RNA polymerase. Part of the viral assembly initiation complex composed of NS2, E1, E2, NS3, NS4A, NS5A and the mature core protein. Part of the replication complex composed of NS2, NS3, NS4A, NS4B, NS5A and the RNA-directed RNA polymerase embedded in an ER-derived membranous web. Interacts with host GRB2. Interacts with host BIN1. Interacts with host PIK3R1. Interacts with host SRCAP. Interacts with host FKBP8. Interacts (via C-terminus) with host VAPB (via MSP domain). Interacts with host EIF2AK2/PKR; this interaction leads to disruption of EIF2AK2 dimerization by NS5A and probably allows the virus to evade the innate immune response. Interacts (via N-terminus) with host PACSIN2 (via N-terminus); this interaction attenuates protein kinase C alpha-mediated phosphorylation of PACSIN2 by disrupting the interaction between PACSIN2 and PRKCA. Interacts (via N-terminus) with host SRC kinase (via SH2 domain). Interacts with most Src-family kinases. Interacts with host IFI27 and SKP2; promotes the ubiquitin-mediated proteasomal degradation of NS5A. Interacts with host GPS2. Interacts with host TNFRSF21; this interaction allows the modulation by the virus of JNK, p38 MAPK, STAT3, and Akt signaling pathways in a DR6-dependent manner. Interacts (via N-terminus) with host CIDEB (via N-terminus); this interaction seems to regulate the association of HCV particles with APOE. Interacts with host CHKA/Choline Kinase-alpha; CHKA bridges host PI4KA and NS5A and potentiates NS5A-stimulated PI4KA activity, which then facilitates the targeting of the ternary complex to the ER for viral replication. Interacts with host SPSB2 (via C-terminus); this interaction targets NS5A for ubiquitination and degradation. Interacts with host RAB18; this interaction may promote the association of NS5A and other replicase components with lipid droplets. Interacts (via region D2) with host PPIA/CYPA; the interaction stimulates RNA-binding ability of NS5A and is dependent on the peptidyl-prolyl cis-trans isomerase activity of PPIA/CYPA. Interacts with host TRIM14; this interaction induces the degradation of NS5A. As to quaternary structure, homooligomer. Interacts with non-structural protein 5A. Interacts with host VAPB. Interacts with host PRK2/PKN2. Interacts with host HNRNPA1 and SEPT6; these interactions facilitate viral replication. Part of the replication complex composed of NS2, NS3, NS4A, NS4B, NS5A and the RNA-directed RNA polymerase. Requires Zn(2+) as cofactor. Mg(2+) serves as cofactor. Post-translationally, specific enzymatic cleavages in vivo yield mature proteins. The structural proteins, core, E1, E2 and p7 are produced by proteolytic processing by host signal peptidases. The core protein precursor is synthesized as a 23 kDa, which is retained in the ER membrane through the hydrophobic signal peptide. Cleavage by the signal peptidase releases the 21 kDa mature core protein. The cleavage of the core protein precursor occurs between aminoacids 176 and 188 but the exact cleavage site is not known. Some degraded forms of the core protein appear as well during the course of infection. The other proteins (p7, NS2, NS3, NS4A, NS4B, NS5A and NS5B) are cleaved by the viral proteases. Autoprocessing between NS2 and NS3 is mediated by the NS2 cysteine protease catalytic domain and regulated by the NS3 N-terminal domain. In terms of processing, phosphorylated by host PKC and PKA. Ubiquitinated; mediated by UBE3A and leading to core protein subsequent proteasomal degradation. Post-translationally, highly N-glycosylated. In terms of processing, palmitoylation is required for NS2/3 autoprocessing and E2 recruitment to membranes. Palmitoylated. This modification may play a role in its polymerization or in protein-protein interactions. Post-translationally, phosphorylated on serines in a basal form termed p56. p58 is a hyperphosphorylated form of p56. p56 and p58 coexist in the cell in roughly equivalent amounts. Hyperphosphorylation is dependent on the presence of NS4A. Host CSNK1A1/CKI-alpha or RPS6KB1 kinases may be responsible for NS5A phosphorylation. In terms of processing, tyrosine phosphorylation is essential for the interaction with host SRC. Ubiquitinated. Ubiquitination, most probably at Lys-2350, mediated by host IFI27 and SKP2 leads to proteasomal degradation, restricting viral infection. Ubiquitination by host TRIM22 leads to interruption of viral replication. Post-translationally, the N-terminus is phosphorylated by host PRK2/PKN2.

The protein resides in the host endoplasmic reticulum membrane. It localises to the host mitochondrion membrane. It is found in the virion. The protein localises to the host cytoplasm. Its subcellular location is the host nucleus. The protein resides in the host lipid droplet. It localises to the virion membrane. It is found in the host mitochondrion. The protein localises to the host cell membrane. Its subcellular location is the host perinuclear region. The enzyme catalyses Hydrolysis of four peptide bonds in the viral precursor polyprotein, commonly with Asp or Glu in the P6 position, Cys or Thr in P1 and Ser or Ala in P1'.. The catalysed reaction is a ribonucleoside 5'-triphosphate + H2O = a ribonucleoside 5'-diphosphate + phosphate + H(+). It catalyses the reaction ATP + H2O = ADP + phosphate + H(+). It carries out the reaction RNA(n) + a ribonucleoside 5'-triphosphate = RNA(n+1) + diphosphate. With respect to regulation, inhibited by the antiviral drug hexamethylene amiloride. Inhibition by amantadine appears to be genotype-dependent. Also inhibited by long-alkyl-chain iminosugar derivatives. Activity is up-regulated by PRK2/PKN2-mediated phosphorylation. In terms of biological role, packages viral RNA to form a viral nucleocapsid, and promotes virion budding. Participates in the viral particle production as a result of its interaction with the non-structural protein 5A. Binds RNA and may function as a RNA chaperone to induce the RNA structural rearrangements taking place during virus replication. Modulates viral translation initiation by interacting with viral IRES and 40S ribosomal subunit. Affects various cell signaling pathways, host immunity and lipid metabolism. Prevents the establishment of cellular antiviral state by blocking the interferon-alpha/beta (IFN-alpha/beta) and IFN-gamma signaling pathways and by blocking the formation of phosphorylated STAT1 and promoting ubiquitin-mediated proteasome-dependent degradation of STAT1. Activates STAT3 leading to cellular transformation. Regulates the activity of cellular genes, including c-myc and c-fos. May repress the promoter of p53, and sequester CREB3 and SP110 isoform 3/Sp110b in the cytoplasm. Represses cell cycle negative regulating factor CDKN1A, thereby interrupting an important check point of normal cell cycle regulation. Targets transcription factors involved in the regulation of inflammatory responses and in the immune response: suppresses TNF-induced NF-kappa-B activation, and activates AP-1. Binds to dendritic cells (DCs) via C1QR1, resulting in down-regulation of T-lymphocytes proliferation. Alters lipid metabolism by interacting with hepatocellular proteins involved in lipid accumulation and storage. Induces up-regulation of FAS promoter activity, and thereby contributes to the increased triglyceride accumulation in hepatocytes (steatosis). Functionally, forms a heterodimer with envelope glycoprotein E2, which mediates virus attachment to the host cell, virion internalization through clathrin-dependent endocytosis and fusion with host membrane. Fusion with the host cell is most likely mediated by both E1 and E2, through conformational rearrangements of the heterodimer required for fusion rather than a classical class II fusion mechanism. E1/E2 heterodimer binds host apolipoproteins such as APOB and APOE thereby forming a lipo-viro-particle (LVP). APOE associated to the LVP allows the initial virus attachment to cell surface receptors such as the heparan sulfate proteoglycans (HSPGs), syndecan-1 (SDC1), syndecan-1 (SDC2), the low-density lipoprotein receptor (LDLR) and scavenger receptor class B type I (SCARB1). The cholesterol transfer activity of SCARB1 allows E2 exposure and binding of E2 to SCARB1 and the tetraspanin CD81. E1/E2 heterodimer binding on CD81 activates the epithelial growth factor receptor (EGFR) signaling pathway. Diffusion of the complex E1-E2-EGFR-SCARB1-CD81 to the cell lateral membrane allows further interaction with Claudin 1 (CLDN1) and occludin (OCLN) to finally trigger HCV entry. Forms a heterodimer with envelope glycoprotein E1, which mediates virus attachment to the host cell, virion internalization through clathrin-dependent endocytosis and fusion with host membrane. Fusion with the host cell is most likely mediated by both E1 and E2, through conformational rearrangements of the heterodimer required for fusion rather than a classical class II fusion mechanism. The interaction between envelope glycoprotein E2 and host apolipoprotein E/APOE allows the proper assembly, maturation and infectivity of the viral particles. This interaction is probably promoted via the up-regulation of cellular autophagy by the virus. E1/E2 heterodimer binds host apolipoproteins such as APOB and APOE thereby forming a lipo-viro-particle (LVP). APOE associated to the LVP allows the initial virus attachment to cell surface receptors such as the heparan sulfate proteoglycans (HSPGs), syndecan-1 (SDC1), syndecan-1 (SDC2), the low-density lipoprotein receptor (LDLR) and scavenger receptor class B type I (SCARB1). The cholesterol transfer activity of SCARB1 allows E2 exposure and binding of E2 to SCARB1 and the tetraspanin CD81. E1/E2 heterodimer binding on CD81 activates the epithelial growth factor receptor (EGFR) signaling pathway. Diffusion of the complex E1-E2-EGFR-SCARB1-CD81 to the cell lateral membrane allows further interaction with Claudin 1 (CLDN1) and occludin (OCLN) to finally trigger HCV entry. Inhibits host EIF2AK2/PKR activation, preventing the establishment of an antiviral state. Viral ligand for CD209/DC-SIGN and CLEC4M/DC-SIGNR, which are respectively found on dendritic cells (DCs), and on liver sinusoidal endothelial cells and macrophage-like cells of lymph node sinuses. These interactions allow the capture of circulating HCV particles by these cells and subsequent facilitated transmission to permissive cells such as hepatocytes and lymphocyte subpopulations. The interaction between E2 and host amino acid transporter complex formed by SLC3A2 and SLC7A5/LAT1 may facilitate viral entry into host cell. Its function is as follows. Ion channel protein that acts as a viroporin and plays an essential role in the assembly, envelopment and secretion of viral particles. Regulates the host cell secretory pathway, which induces the intracellular retention of viral glycoproteins and favors assembly of viral particles. Creates a pore in acidic organelles and releases Ca(2+) and H(+) in the cytoplasm of infected cells, leading to a productive viral infection. High levels of cytoplasmic Ca(2+) may trigger membrane trafficking and transport of viral ER-associated proteins to viroplasms, sites of viral genome replication. This ionic imbalance induces the assembly of the inflammasome complex, which triggers the maturation of pro-IL-1beta into IL-1beta through the action of caspase-1. Targets also host mitochondria and induces mitochondrial depolarization. In addition of its role as a viroporin, acts as a lipid raft adhesion factor. In terms of biological role, cysteine protease required for the proteolytic auto-cleavage between the non-structural proteins NS2 and NS3. The N-terminus of NS3 is required for the function of NS2 protease (active region NS2-3). Promotes the initiation of viral particle assembly by mediating the interaction between structural and non-structural proteins. Functionally, displays three enzymatic activities: serine protease with a chymotrypsin-like fold, NTPase and RNA helicase. NS3 serine protease, in association with NS4A, is responsible for the cleavages of NS3-NS4A, NS4A-NS4B, NS4B-NS5A and NS5A-NS5B. The NS3/NS4A complex prevents phosphorylation of host IRF3, thus preventing the establishment of dsRNA induced antiviral state. The NS3/NS4A complex induces host amino acid transporter component SLC3A2, thus contributing to HCV propagation. NS3 RNA helicase binds to RNA and unwinds both dsDNA and dsRNA in the 3' to 5' direction, and likely resolves RNA complicated stable secondary structures in the template strand. Binds a single ATP and catalyzes the unzipping of a single base pair of dsRNA. Inhibits host antiviral proteins TBK1 and IRF3 thereby preventing the establishment of an antiviral state. Cleaves host MAVS/CARDIF thereby preventing the establishment of an antiviral state. Cleaves host TICAM1/TRIF, thereby disrupting TLR3 signaling and preventing the establishment of an antiviral state. Peptide cofactor which forms a non-covalent complex with the N-terminal of NS3 serine protease. The NS3/NS4A complex prevents phosphorylation of host IRF3, thus preventing the establishment of dsRNA induced antiviral state. The NS3/NS4A complex induces host amino acid transporter component SLC3A2, thus contributing to HCV propagation. Its function is as follows. Induces a specific membrane alteration that serves as a scaffold for the virus replication complex. This membrane alteration gives rise to the so-called ER-derived membranous web that contains the replication complex. NS4B self-interaction contributes to its function in membranous web formation. Promotes host TRIF protein degradation in a CASP8-dependent manner thereby inhibiting host TLR3-mediated interferon signaling. Disrupts the interaction between STING and TBK1 contributing to the inhibition of interferon signaling. In terms of biological role, phosphorylated protein that is indispensable for viral replication and assembly. Both hypo- and hyperphosphorylated states are required for the viral life cycle. The hyperphosphorylated form of NS5A is an inhibitor of viral replication. Involved in RNA-binding and especially in binding to the viral genome. Zinc is essential for RNA-binding. Participates in the viral particle production as a result of its interaction with the mature viral core protein. Its interaction with host VAPB may target the viral replication complex to vesicles. Down-regulates viral IRES translation initiation. Mediates interferon resistance, presumably by interacting with and inhibiting host EIF2AK2/PKR. Prevents BIN1-induced apoptosis. Acts as a transcriptional activator of some host genes important for viral replication when localized in the nucleus. Via the interaction with host PACSIN2, modulates lipid droplet formation in order to promote virion assembly. Modulates TNFRSF21/DR6 signaling pathway for viral propagation. Functionally, RNA-dependent RNA polymerase that performs primer-template recognition and RNA synthesis during viral replication. Initiates RNA transcription/replication at a flavin adenine dinucleotide (FAD), resulting in a 5'- FAD cap on viral RNAs. In this way, recognition of viral 5' RNA by host pattern recognition receptors can be bypassed, thereby evading activation of antiviral pathways. This chain is Genome polyprotein, found in Homo sapiens (Human).